A 68-amino-acid chain; its full sequence is MKLCVVIVLLMLAMPFNGGEASRFFNQHARSQRSGMKTRGIWCDPPCPKGETCRGGECSDEFNSDVGR.

The signal sequence occupies residues 1–21 (MKLCVVIVLLMLAMPFNGGEA). Positions 22–38 (SRFFNQHARSQRSGMKT) are excised as a propeptide. Valine 66 bears the Valine amide mark.

Post-translationally, contains 2 disulfide bonds. Expressed by the venom duct.

The protein resides in the secreted. Probable neurotoxin with unknown target. Possibly targets ion channels. The polypeptide is Conotoxin Cal14.13a (Californiconus californicus (California cone)).